Reading from the N-terminus, the 337-residue chain is Phosphate acyltransferase (337 aa).

The protein belongs to the PlsX family. In terms of assembly, homodimer. Probably interacts with PlsY.

The protein localises to the cytoplasm. It carries out the reaction a fatty acyl-[ACP] + phosphate = an acyl phosphate + holo-[ACP]. It participates in lipid metabolism; phospholipid metabolism. Catalyzes the reversible formation of acyl-phosphate (acyl-PO(4)) from acyl-[acyl-carrier-protein] (acyl-ACP). This enzyme utilizes acyl-ACP as fatty acyl donor, but not acyl-CoA. This is Phosphate acyltransferase from Polynucleobacter asymbioticus (strain DSM 18221 / CIP 109841 / QLW-P1DMWA-1) (Polynucleobacter necessarius subsp. asymbioticus).